We begin with the raw amino-acid sequence, 143 residues long: Large ribosomal subunit protein uL13 (143 aa).

The protein belongs to the universal ribosomal protein uL13 family. As to quaternary structure, part of the 50S ribosomal subunit.

In terms of biological role, this protein is one of the early assembly proteins of the 50S ribosomal subunit, although it is not seen to bind rRNA by itself. It is important during the early stages of 50S assembly. The sequence is that of Large ribosomal subunit protein uL13 from Dehalococcoides mccartyi (strain ATCC BAA-2266 / KCTC 15142 / 195) (Dehalococcoides ethenogenes (strain 195)).